The following is a 551-amino-acid chain: Xylulose kinase (551 aa).

The substrate site is built by histidine 114, arginine 185, aspartate 295, and asparagine 296. ATP-binding positions include tryptophan 370, glycine 456–alanine 457, and asparagine 460.

It belongs to the FGGY kinase family. In terms of assembly, monomer.

It catalyses the reaction D-xylulose + ATP = D-xylulose 5-phosphate + ADP + H(+). Functionally, phosphorylates D-xylulose to produce D-xylulose 5-phosphate, a molecule that may play an important role in the regulation of glucose metabolism and lipogenesis. The protein is Xylulose kinase (Xylb) of Mus musculus (Mouse).